The sequence spans 267 residues: tRNA (guanine-N(1)-)-methyltransferase (267 aa).

Residues Gly119 and 139–144 (IGDYVL) contribute to the S-adenosyl-L-methionine site.

This sequence belongs to the RNA methyltransferase TrmD family. As to quaternary structure, homodimer.

The protein localises to the cytoplasm. The catalysed reaction is guanosine(37) in tRNA + S-adenosyl-L-methionine = N(1)-methylguanosine(37) in tRNA + S-adenosyl-L-homocysteine + H(+). In terms of biological role, specifically methylates guanosine-37 in various tRNAs. The sequence is that of tRNA (guanine-N(1)-)-methyltransferase from Chromohalobacter salexigens (strain ATCC BAA-138 / DSM 3043 / CIP 106854 / NCIMB 13768 / 1H11).